Here is a 61-residue protein sequence, read N- to C-terminus: UPF0391 membrane protein Ajs_0703 (61 aa).

Transmembrane regions (helical) follow at residues 5–25 (AIIF…GVAA) and 33–53 (VLFV…LLGI).

It belongs to the UPF0391 family.

It is found in the cell membrane. The polypeptide is UPF0391 membrane protein Ajs_0703 (Acidovorax sp. (strain JS42)).